The chain runs to 159 residues: Phosphopantetheine adenylyltransferase (159 aa).

Residue Thr10 participates in substrate binding. Residues 10-11 (TF) and His18 each bind ATP. Substrate is bound by residues Lys42, Met74, and Arg88. ATP contacts are provided by residues 89 to 91 (GLR), Glu99, and 124 to 130 (WSFISSS).

This sequence belongs to the bacterial CoaD family. Homohexamer. The cofactor is Mg(2+).

The protein localises to the cytoplasm. The catalysed reaction is (R)-4'-phosphopantetheine + ATP + H(+) = 3'-dephospho-CoA + diphosphate. It functions in the pathway cofactor biosynthesis; coenzyme A biosynthesis; CoA from (R)-pantothenate: step 4/5. In terms of biological role, reversibly transfers an adenylyl group from ATP to 4'-phosphopantetheine, yielding dephospho-CoA (dPCoA) and pyrophosphate. The protein is Phosphopantetheine adenylyltransferase of Enterobacter sp. (strain 638).